Here is a 292-residue protein sequence, read N- to C-terminus: Acetylglutamate kinase (292 aa).

Residues 64 to 65 (GG), arginine 86, and asparagine 190 each bind substrate.

The protein belongs to the acetylglutamate kinase family. ArgB subfamily.

Its subcellular location is the cytoplasm. It carries out the reaction N-acetyl-L-glutamate + ATP = N-acetyl-L-glutamyl 5-phosphate + ADP. Its pathway is amino-acid biosynthesis; L-arginine biosynthesis; N(2)-acetyl-L-ornithine from L-glutamate: step 2/4. Functionally, catalyzes the ATP-dependent phosphorylation of N-acetyl-L-glutamate. This chain is Acetylglutamate kinase, found in Geobacter sp. (strain M21).